The chain runs to 309 residues: Homoserine O-succinyltransferase (309 aa).

C142 acts as the Acyl-thioester intermediate in catalysis. K163 and S192 together coordinate substrate. The active-site Proton acceptor is the H235. Residue E237 is part of the active site. Residue R249 participates in substrate binding.

The protein belongs to the MetA family. In terms of assembly, homodimer.

The protein localises to the cytoplasm. It carries out the reaction L-homoserine + succinyl-CoA = O-succinyl-L-homoserine + CoA. It participates in amino-acid biosynthesis; L-methionine biosynthesis via de novo pathway; O-succinyl-L-homoserine from L-homoserine: step 1/1. Functionally, transfers a succinyl group from succinyl-CoA to L-homoserine, forming succinyl-L-homoserine. This is Homoserine O-succinyltransferase from Escherichia coli O127:H6 (strain E2348/69 / EPEC).